Reading from the N-terminus, the 45-residue chain is Globin, minor monomeric component (45 aa).

A Globin domain is found at 1–45; it reads GLSAAERQVVASCWKDIAGADXGAGVGKEXLIKFISAAPEMAAVF.

The protein belongs to the globin family. As to quaternary structure, monomer.

This chain is Globin, minor monomeric component, found in Glycera dibranchiata (Bloodworm).